The following is a 502-amino-acid chain: ATP synthase subunit alpha (502 aa).

An ATP-binding site is contributed by 169 to 176 (GDRQTGKT).

Belongs to the ATPase alpha/beta chains family. As to quaternary structure, F-type ATPases have 2 components, CF(1) - the catalytic core - and CF(0) - the membrane proton channel. CF(1) has five subunits: alpha(3), beta(3), gamma(1), delta(1), epsilon(1). CF(0) has three main subunits: a(1), b(2) and c(9-12). The alpha and beta chains form an alternating ring which encloses part of the gamma chain. CF(1) is attached to CF(0) by a central stalk formed by the gamma and epsilon chains, while a peripheral stalk is formed by the delta and b chains.

Its subcellular location is the cell membrane. It catalyses the reaction ATP + H2O + 4 H(+)(in) = ADP + phosphate + 5 H(+)(out). Its function is as follows. Produces ATP from ADP in the presence of a proton gradient across the membrane. The alpha chain is a regulatory subunit. The protein is ATP synthase subunit alpha of Clostridium perfringens (strain SM101 / Type A).